The chain runs to 216 residues: Eukaryotic translation initiation factor isoform 4E-2 (216 aa).

Residues M1–P23 form a disordered region. C113 and C152 are oxidised to a cystine.

It belongs to the eukaryotic initiation factor 4E family. As to quaternary structure, EIF4F is a multi-subunit complex, the composition of which varies with external and internal environmental conditions. It is composed of at least EIF4A, EIF4E and EIF4G. EIF4E is also known to interact with other partners. In higher plants two isoforms of EIF4F have been identified, named isoform EIF4F and isoform EIF(iso)4F. Isoform EIF4F has subunits p220 and p26, whereas isoform EIF(iso)4F has subunits p82 and p28. Post-translationally, according to the redox status, the Cys-113-Cys-152 disulfide bridge may have a role in regulating protein function by affecting its ability to bind capped mRNA.

Recognizes and binds the 7-methylguanosine-containing mRNA cap during an early step in the initiation of protein synthesis and facilitates ribosome binding by inducing the unwinding of the mRNAs secondary structures. The polypeptide is Eukaryotic translation initiation factor isoform 4E-2 (Zea mays (Maize)).